We begin with the raw amino-acid sequence, 424 residues long: NADH-quinone oxidoreductase subunit H (424 aa).

The next 9 helical transmembrane spans lie at 11–31, 79–99, 119–139, 160–180, 193–213, 255–275, 283–303, 317–337, and 347–367; these read LVVAKAIAIFVFLMLTVLVAI, FVYFVAPIISVIPAFTAFAFI, LPVAVLFILGLSAIGVYGIVL, VISYEVAMGLSFAAVFLYAGS, VWYIFLLLPSFVIYLISMVGE, VSALAATLFLGGWHAPWPLNL, WWPVLWFTAKVWGFLFMYFWL, ALGWKLLIPVSLVWVLIAAVI, and YWTPALVVSSIVVAAILVMSL. The segment at 376–424 is disordered; it reads AVTKARRRGKQPAAGPDEQGALEPLFPTPPLPMKPLAQPVGASKENARG.

The protein belongs to the complex I subunit 1 family. In terms of assembly, NDH-1 is composed of 14 different subunits. Subunits NuoA, H, J, K, L, M, N constitute the membrane sector of the complex.

It localises to the cell membrane. It carries out the reaction a quinone + NADH + 5 H(+)(in) = a quinol + NAD(+) + 4 H(+)(out). Functionally, NDH-1 shuttles electrons from NADH, via FMN and iron-sulfur (Fe-S) centers, to quinones in the respiratory chain. The immediate electron acceptor for the enzyme in this species is believed to be menaquinone. Couples the redox reaction to proton translocation (for every two electrons transferred, four hydrogen ions are translocated across the cytoplasmic membrane), and thus conserves the redox energy in a proton gradient. This subunit may bind ubiquinone. The protein is NADH-quinone oxidoreductase subunit H of Mycobacterium ulcerans (strain Agy99).